We begin with the raw amino-acid sequence, 259 residues long: Pimeloyl-[acyl-carrier protein] methyl ester esterase (259 aa).

Positions 16–241 (FVMLHGWGMN…QSAHVPFISH (226 aa)) constitute an AB hydrolase-1 domain. Substrate is bound by residues Trp-22, 82–83 (SM), and 143–147 (FLLLQ). The active-site Nucleophile is the Ser-82. Active-site residues include Asp-207 and His-235. His-235 is a binding site for substrate.

The protein belongs to the AB hydrolase superfamily. Carboxylesterase BioH family. Monomer.

Its subcellular location is the cytoplasm. The catalysed reaction is 6-carboxyhexanoyl-[ACP] methyl ester + H2O = 6-carboxyhexanoyl-[ACP] + methanol + H(+). Its pathway is cofactor biosynthesis; biotin biosynthesis. Functionally, the physiological role of BioH is to remove the methyl group introduced by BioC when the pimeloyl moiety is complete. It allows to synthesize pimeloyl-ACP via the fatty acid synthetic pathway through the hydrolysis of the ester bonds of pimeloyl-ACP esters. The chain is Pimeloyl-[acyl-carrier protein] methyl ester esterase from Hamiltonella defensa subsp. Acyrthosiphon pisum (strain 5AT).